We begin with the raw amino-acid sequence, 544 residues long: Phenylalanine--tRNA ligase beta subunit (544 aa).

The 76-residue stretch at 268–343 (LIHKIQNVRE…MSIGYNNLEP (76 aa)) folds into the B5 domain. Mg(2+) contacts are provided by Asp-321, Asp-327, Glu-330, and Asp-331.

This sequence belongs to the phenylalanyl-tRNA synthetase beta subunit family. Type 2 subfamily. In terms of assembly, tetramer of two alpha and two beta subunits. The cofactor is Mg(2+).

It is found in the cytoplasm. It catalyses the reaction tRNA(Phe) + L-phenylalanine + ATP = L-phenylalanyl-tRNA(Phe) + AMP + diphosphate + H(+). This Saccharolobus solfataricus (strain ATCC 35092 / DSM 1617 / JCM 11322 / P2) (Sulfolobus solfataricus) protein is Phenylalanine--tRNA ligase beta subunit.